We begin with the raw amino-acid sequence, 357 residues long: (4E)-oxalomesaconate Delta-isomerase (357 aa).

Belongs to the PrpF family.

It catalyses the reaction (1E)-4-oxobut-1-ene-1,2,4-tricarboxylate = (3Z)-2-oxo-4-carboxy-3-hexenedioate. It functions in the pathway secondary metabolite metabolism; lignin degradation. Its function is as follows. Contributes to the degradation of lignin at the level of the protocatechuate 4,5-cleavage pathway. Catalyzes the isomerization of the double bond between C4 and C5 in (4E)-oxalomesaconate (OMA) to (3Z)-2-keto-4-carboxy-3-hexenedioate (KCH), where the double bond has migrated between C3 and C4 via a 1,3-allylic isomerization. The protein is (4E)-oxalomesaconate Delta-isomerase of Novosphingobium sp. (strain KA1) (Sphingomonas sp. (strain KA1)).